We begin with the raw amino-acid sequence, 151 residues long: UPF0756 membrane protein Moth_0120 (151 aa).

Helical transmembrane passes span 6–26 (VILILLMLLGILGRSNVIAAA), 52–72 (AGLIFLVVSVLVPFASGRVAP), 75–95 (MLQSFVSLPGLIAIASGIIAT), and 111–131 (MMIGMVIGSIIGVAFFGGIPV).

Belongs to the UPF0756 family.

The protein resides in the cell membrane. The polypeptide is UPF0756 membrane protein Moth_0120 (Moorella thermoacetica (strain ATCC 39073 / JCM 9320)).